Consider the following 55-residue polypeptide: Conotoxin Cal22c (55 aa).

A propeptide spanning residues 1–5 (GRPSA) is cleaved from the precursor.

Post-translationally, contains 4 disulfide bonds. In terms of tissue distribution, expressed by the venom duct.

It is found in the secreted. Its function is as follows. Probable neurotoxin with unknown target. Possibly targets ion channels. In Californiconus californicus (California cone), this protein is Conotoxin Cal22c.